The following is a 74-amino-acid chain: Putative membrane protein insertion efficiency factor (74 aa).

It belongs to the UPF0161 family.

The protein resides in the cell inner membrane. Could be involved in insertion of integral membrane proteins into the membrane. This chain is Putative membrane protein insertion efficiency factor, found in Endomicrobium trichonymphae.